The sequence spans 768 residues: DNA ligase (768 aa).

NAD(+) contacts are provided by residues aspartate 61–aspartate 65, serine 110–leucine 111, and glutamate 146. The N6-AMP-lysine intermediate role is filled by lysine 148. The NAD(+) site is built by arginine 169, glutamate 206, lysine 322, and lysine 346. Residues cysteine 443, cysteine 446, cysteine 462, and cysteine 468 each contribute to the Zn(2+) site. In terms of domain architecture, BRCT spans serine 661–alanine 750. Residues asparagine 739–glutamate 768 form a disordered region. Residues threonine 746–glutamate 768 show a composition bias toward low complexity.

It belongs to the NAD-dependent DNA ligase family. LigA subfamily. Mg(2+) serves as cofactor. It depends on Mn(2+) as a cofactor.

The catalysed reaction is NAD(+) + (deoxyribonucleotide)n-3'-hydroxyl + 5'-phospho-(deoxyribonucleotide)m = (deoxyribonucleotide)n+m + AMP + beta-nicotinamide D-nucleotide.. Functionally, DNA ligase that catalyzes the formation of phosphodiester linkages between 5'-phosphoryl and 3'-hydroxyl groups in double-stranded DNA using NAD as a coenzyme and as the energy source for the reaction. It is essential for DNA replication and repair of damaged DNA. This is DNA ligase from Paenarthrobacter aurescens (strain TC1).